The chain runs to 479 residues: Proline--tRNA ligase (479 aa).

It belongs to the class-II aminoacyl-tRNA synthetase family. ProS type 3 subfamily. As to quaternary structure, homodimer.

The protein resides in the cytoplasm. The enzyme catalyses tRNA(Pro) + L-proline + ATP = L-prolyl-tRNA(Pro) + AMP + diphosphate. Functionally, catalyzes the attachment of proline to tRNA(Pro) in a two-step reaction: proline is first activated by ATP to form Pro-AMP and then transferred to the acceptor end of tRNA(Pro). The sequence is that of Proline--tRNA ligase from Mesomycoplasma hyopneumoniae (strain J / ATCC 25934 / NCTC 10110) (Mycoplasma hyopneumoniae).